We begin with the raw amino-acid sequence, 308 residues long: Maspardin (308 aa).

Residues 87–159 enclose the AB hydrolase-1 domain; the sequence is FCDGFRKLLD…NSFWLMPAFM (73 aa). The residue at position 304 (S304) is a Phosphoserine.

The protein belongs to the AB hydrolase superfamily. Interacts with CD4. Interacts with ALDH16A1.

The protein resides in the cytoplasm. In terms of biological role, may play a role as a negative regulatory factor in CD4-dependent T-cell activation. This chain is Maspardin (SPG21), found in Pongo abelii (Sumatran orangutan).